Reading from the N-terminus, the 252-residue chain is tRNA pseudouridine synthase A (252 aa).

Residue Asp52 is the Nucleophile of the active site. Residue Tyr110 coordinates substrate.

This sequence belongs to the tRNA pseudouridine synthase TruA family. Homodimer.

The catalysed reaction is uridine(38/39/40) in tRNA = pseudouridine(38/39/40) in tRNA. Formation of pseudouridine at positions 38, 39 and 40 in the anticodon stem and loop of transfer RNAs. This is tRNA pseudouridine synthase A from Blochmanniella floridana.